The primary structure comprises 374 residues: tRNA (adenine(58)-N(1))-methyltransferase catalytic subunit TRM61 (374 aa).

S-adenosyl-L-methionine contacts are provided by residues 120–122, glutamate 138, arginine 143, 167–168, and aspartate 202; these read SGS and DV.

It belongs to the class I-like SAM-binding methyltransferase superfamily. TRM61 family. In terms of assembly, heterotetramer; composed of two copies of TRM6 and two copies of TRM61.

The protein localises to the nucleus. It carries out the reaction adenosine(58) in tRNA + S-adenosyl-L-methionine = N(1)-methyladenosine(58) in tRNA + S-adenosyl-L-homocysteine + H(+). Functionally, catalytic subunit of tRNA (adenine-N(1)-)-methyltransferase, which catalyzes the formation of N(1)-methyladenine at position 58 (m1A58) in initiator methionyl-tRNA. The chain is tRNA (adenine(58)-N(1))-methyltransferase catalytic subunit TRM61 (TRM61) from Candida glabrata (strain ATCC 2001 / BCRC 20586 / JCM 3761 / NBRC 0622 / NRRL Y-65 / CBS 138) (Yeast).